A 212-amino-acid polypeptide reads, in one-letter code: Uracil phosphoribosyltransferase (212 aa).

Residues Arg-78, Arg-103, and 130-138 (DPMLATGSS) each bind 5-phospho-alpha-D-ribose 1-diphosphate. Residues Ile-193 and 198 to 200 (GDA) each bind uracil. Asp-199 contributes to the 5-phospho-alpha-D-ribose 1-diphosphate binding site.

The protein belongs to the UPRTase family. Requires Mg(2+) as cofactor.

The enzyme catalyses UMP + diphosphate = 5-phospho-alpha-D-ribose 1-diphosphate + uracil. It functions in the pathway pyrimidine metabolism; UMP biosynthesis via salvage pathway; UMP from uracil: step 1/1. Allosterically activated by GTP. Its function is as follows. Catalyzes the conversion of uracil and 5-phospho-alpha-D-ribose 1-diphosphate (PRPP) to UMP and diphosphate. This is Uracil phosphoribosyltransferase from Pseudomonas savastanoi pv. phaseolicola (strain 1448A / Race 6) (Pseudomonas syringae pv. phaseolicola (strain 1448A / Race 6)).